The chain runs to 111 residues: Cytochrome c (111 aa).

Ser-1 carries the N-acetylserine modification. Heme c-binding residues include Cys-22, Cys-25, and His-26. Lys-80 carries the post-translational modification N6,N6,N6-trimethyllysine. A heme c-binding site is contributed by Met-88.

It belongs to the cytochrome c family. Post-translationally, binds 1 heme c group covalently per subunit.

The protein resides in the mitochondrion intermembrane space. Electron carrier protein. The oxidized form of the cytochrome c heme group can accept an electron from the heme group of the cytochrome c1 subunit of cytochrome reductase. Cytochrome c then transfers this electron to the cytochrome oxidase complex, the final protein carrier in the mitochondrial electron-transport chain. In Ulva intestinalis (Hollow green nori), this protein is Cytochrome c.